Consider the following 368-residue polypeptide: MDNLKKTPLFELYKKYNGKIIDFAGWALPVQFESIISEHEAVRNAAGLFDVSHMGEITVKGREAFNFLQNLITNDLSKLKGNQVLYTFMCNYNGGVVDDLLVYKYSDEHFYLVVNAANIEKDYKWMKDNKGVYEVEIENISDEVAELAIQGPKAEEILQKLTDTDLSEIKFFCFKDNVKIAGIECLVSRTGYTGEDGFEIYMPNKYAVELWEKIVEVGKEYGLKPAGLGARDTLRFEAGLPLYGNELSEEITPLEAGFEFFVKFDKGNFIGKDALLKQKEEGLKRKIVGFEMIDNGIPRHGYEVRAHNQKIGYVTTGYFSPTLKKNIGLALIDSKYAQLGNQIEIVIRNKPLKALIISKNFYKKNYKK.

The protein belongs to the GcvT family. As to quaternary structure, the glycine cleavage system is composed of four proteins: P, T, L and H.

The catalysed reaction is N(6)-[(R)-S(8)-aminomethyldihydrolipoyl]-L-lysyl-[protein] + (6S)-5,6,7,8-tetrahydrofolate = N(6)-[(R)-dihydrolipoyl]-L-lysyl-[protein] + (6R)-5,10-methylene-5,6,7,8-tetrahydrofolate + NH4(+). In terms of biological role, the glycine cleavage system catalyzes the degradation of glycine. The protein is Aminomethyltransferase of Thermoanaerobacter sp. (strain X514).